A 693-amino-acid polypeptide reads, in one-letter code: Elongation factor G (693 aa).

The region spanning glutamate 7–threonine 282 is the tr-type G domain. Residues alanine 16–threonine 23, aspartate 80–histidine 84, and asparagine 134–aspartate 137 contribute to the GTP site.

Belongs to the TRAFAC class translation factor GTPase superfamily. Classic translation factor GTPase family. EF-G/EF-2 subfamily.

The protein resides in the cytoplasm. Functionally, catalyzes the GTP-dependent ribosomal translocation step during translation elongation. During this step, the ribosome changes from the pre-translocational (PRE) to the post-translocational (POST) state as the newly formed A-site-bound peptidyl-tRNA and P-site-bound deacylated tRNA move to the P and E sites, respectively. Catalyzes the coordinated movement of the two tRNA molecules, the mRNA and conformational changes in the ribosome. The sequence is that of Elongation factor G from Granulibacter bethesdensis (strain ATCC BAA-1260 / CGDNIH1).